A 217-amino-acid chain; its full sequence is Acyl-homoserine-lactone synthase (217 aa).

Belongs to the autoinducer synthase family.

The catalysed reaction is a fatty acyl-[ACP] + S-adenosyl-L-methionine = an N-acyl-L-homoserine lactone + S-methyl-5'-thioadenosine + holo-[ACP] + H(+). In terms of biological role, required for the synthesis of OHHL (N-(3-oxohexanoyl)-L-homoserine lactone), an autoinducer molecule which binds to ExpR and thus acts in virulence (soft rot disease) through the activation of genes for plant tissue macerating enzymes. The polypeptide is Acyl-homoserine-lactone synthase (expI) (Pectobacterium parmentieri).